Here is a 514-residue protein sequence, read N- to C-terminus: Peptide chain release factor 3 (514 aa).

The tr-type G domain maps to 8-268 (KKRRTFAIIS…TFLEFAPEPH (261 aa)). GTP is bound by residues 17-24 (SHPDAGKT), 85-89 (DTPGH), and 139-142 (NKLD).

This sequence belongs to the TRAFAC class translation factor GTPase superfamily. Classic translation factor GTPase family. PrfC subfamily.

The protein localises to the cytoplasm. Its function is as follows. Increases the formation of ribosomal termination complexes and stimulates activities of RF-1 and RF-2. It binds guanine nucleotides and has strong preference for UGA stop codons. It may interact directly with the ribosome. The stimulation of RF-1 and RF-2 is significantly reduced by GTP and GDP, but not by GMP. The sequence is that of Peptide chain release factor 3 from Streptococcus pyogenes serotype M28 (strain MGAS6180).